We begin with the raw amino-acid sequence, 381 residues long: DNA dC-&gt;dU-editing enzyme APOBEC-3G (381 aa).

An essential for cytoplasmic localization region spans residues 1–62 (MKPQTRNTVV…ANIFQGQVSF (62 aa)). 2 CMP/dCMP-type deaminase domains span residues 29 to 143 (HRNT…SQTG) and 211 to 325 (GQHQ…LRRL). Phosphothreonine; by PKA is present on Thr-32. Zn(2+) contacts are provided by His-67, Cys-98, and Cys-101. The necessary for homooligomerization stretch occupies residues 206-333 (DPSVLGQHQS…RLDRAGTPIS (128 aa)). The interaction with DNA stretch occupies residues 210 to 212 (LGQ). Zn(2+) is bound at residue His-254. Glu-256 (proton donor) is an active-site residue. 2 residues coordinate Zn(2+): Cys-285 and Cys-288. The interaction with DNA stretch occupies residues 310 to 317 (RIYDYQRG).

This sequence belongs to the cytidine and deoxycytidylate deaminase family. In terms of assembly, homodimer. Homooligomer. Can bind RNA to form ribonucleoprotein complexes of high-molecular-mass (HMM) or low-molecular-mass (LMM). HMM is inactive and heterogeneous in protein composition because of binding nonselectively to cellular RNAs, which in turn are associated with variety of cellular proteins. The LMM form which is enzymatically active has few or no RNAs associated. Its ability to form homooligomer is distinct from its ability to assemble into HMM. Interacts with APOBEC3B, APOBEC3F, MOV10, AGO2, EIF4E, EIF4ENIF1, DCP2 and DDX6 in an RNA-dependent manner. Interacts with AGO1, AGO3 and PKA/PRKACA. Zn(2+) serves as cofactor.

Its subcellular location is the cytoplasm. It is found in the nucleus. The protein localises to the P-body. It catalyses the reaction a 2'-deoxycytidine in single-stranded DNA + H2O + H(+) = a 2'-deoxyuridine in single-stranded DNA + NH4(+). Functionally, DNA deaminase (cytidine deaminase) which acts as an inhibitor of retrovirus replication and retrotransposon mobility. After the penetration of retroviral nucleocapsids into target cells of infection and the initiation of reverse transcription, it can induce the conversion of cytosine to uracil in the minus-sense single-strand viral DNA, leading to G-to-A hypermutations in the subsequent plus-strand viral DNA. The resultant detrimental levels of mutations in the proviral genome, along with a deamination-independent mechanism that works prior to the proviral integration, together exert efficient antiretroviral effects in infected target cells. Selectively targets single-stranded DNA and does not deaminate double-stranded DNA or single- or double-stranded RNA. This Lagothrix lagotricha (Brown woolly monkey) protein is DNA dC-&gt;dU-editing enzyme APOBEC-3G (APOBEC3G).